The primary structure comprises 391 residues: Succinate--CoA ligase [ADP-forming] subunit beta (391 aa).

One can recognise an ATP-grasp domain in the interval 9–245; it reads KQIFAKYGVP…ISEEDADERE (237 aa). ATP is bound by residues Lys46, 53–55, Glu99, Ala102, and Glu107; that span reads GRG. Positions 200 and 214 each coordinate Mg(2+). Residues Asn265 and 322–324 contribute to the substrate site; that span reads GIV.

This sequence belongs to the succinate/malate CoA ligase beta subunit family. As to quaternary structure, heterotetramer of two alpha and two beta subunits. Requires Mg(2+) as cofactor.

The enzyme catalyses succinate + ATP + CoA = succinyl-CoA + ADP + phosphate. The catalysed reaction is GTP + succinate + CoA = succinyl-CoA + GDP + phosphate. Its pathway is carbohydrate metabolism; tricarboxylic acid cycle; succinate from succinyl-CoA (ligase route): step 1/1. Succinyl-CoA synthetase functions in the citric acid cycle (TCA), coupling the hydrolysis of succinyl-CoA to the synthesis of either ATP or GTP and thus represents the only step of substrate-level phosphorylation in the TCA. The beta subunit provides nucleotide specificity of the enzyme and binds the substrate succinate, while the binding sites for coenzyme A and phosphate are found in the alpha subunit. This chain is Succinate--CoA ligase [ADP-forming] subunit beta, found in Sulfurimonas denitrificans (strain ATCC 33889 / DSM 1251) (Thiomicrospira denitrificans (strain ATCC 33889 / DSM 1251)).